The chain runs to 358 residues: Methylthioribose-1-phosphate isomerase (358 aa).

Substrate-binding positions include 54–56 (RGA), arginine 96, and glutamine 205. Residue aspartate 246 is the Proton donor of the active site. 256–257 (SK) is a substrate binding site.

This sequence belongs to the eIF-2B alpha/beta/delta subunits family. MtnA subfamily.

It carries out the reaction 5-(methylsulfanyl)-alpha-D-ribose 1-phosphate = 5-(methylsulfanyl)-D-ribulose 1-phosphate. Its pathway is amino-acid biosynthesis; L-methionine biosynthesis via salvage pathway; L-methionine from S-methyl-5-thio-alpha-D-ribose 1-phosphate: step 1/6. Functionally, catalyzes the interconversion of methylthioribose-1-phosphate (MTR-1-P) into methylthioribulose-1-phosphate (MTRu-1-P). This Pseudomonas putida (strain GB-1) protein is Methylthioribose-1-phosphate isomerase.